The sequence spans 226 residues: Uracil phosphoribosyltransferase (226 aa).

Position 36–40 (36–40 (KGLVK)) interacts with GTP. 5-phospho-alpha-D-ribose 1-diphosphate contacts are provided by residues R86, R111, and 145-153 (DPMLATGST). Uracil is bound by residues I211 and 216–218 (GDA). D217 provides a ligand contact to 5-phospho-alpha-D-ribose 1-diphosphate.

This sequence belongs to the UPRTase family. The cofactor is Mg(2+).

It catalyses the reaction UMP + diphosphate = 5-phospho-alpha-D-ribose 1-diphosphate + uracil. It functions in the pathway pyrimidine metabolism; UMP biosynthesis via salvage pathway; UMP from uracil: step 1/1. Its activity is regulated as follows. Allosterically activated by GTP. Functionally, catalyzes the conversion of uracil and 5-phospho-alpha-D-ribose 1-diphosphate (PRPP) to UMP and diphosphate. The polypeptide is Uracil phosphoribosyltransferase (Haloquadratum walsbyi (strain DSM 16790 / HBSQ001)).